Here is a 210-residue protein sequence, read N- to C-terminus: Orotate phosphoribosyltransferase (210 aa).

5-phospho-alpha-D-ribose 1-diphosphate contacts are provided by residues R94, K98, H100, and 120–128; that span reads EDLISTGGS. S124 contributes to the orotate binding site.

This sequence belongs to the purine/pyrimidine phosphoribosyltransferase family. PyrE subfamily. Homodimer. Mg(2+) serves as cofactor.

The catalysed reaction is orotidine 5'-phosphate + diphosphate = orotate + 5-phospho-alpha-D-ribose 1-diphosphate. Its pathway is pyrimidine metabolism; UMP biosynthesis via de novo pathway; UMP from orotate: step 1/2. Functionally, catalyzes the transfer of a ribosyl phosphate group from 5-phosphoribose 1-diphosphate to orotate, leading to the formation of orotidine monophosphate (OMP). The chain is Orotate phosphoribosyltransferase from Bacillus cytotoxicus (strain DSM 22905 / CIP 110041 / 391-98 / NVH 391-98).